The sequence spans 229 residues: Prolactin (229 aa).

An N-terminal signal peptide occupies residues methionine 1–serine 30. Cysteines 34 and 41 form a disulfide. Residues serine 56, serine 64, and serine 120 each carry the phosphoserine modification. 2 cysteine pairs are disulfide-bonded: cysteine 88–cysteine 204 and cysteine 221–cysteine 229.

The protein belongs to the somatotropin/prolactin family. As to quaternary structure, interacts with PRLR.

It is found in the secreted. Its function is as follows. Prolactin acts primarily on the mammary gland by promoting lactation. In Capra hircus (Goat), this protein is Prolactin (PRL).